The sequence spans 352 residues: C5a anaphylatoxin chemotactic receptor 1 (352 aa).

Over 1 to 38 the chain is Extracellular; it reads MASMNFSPPEYPDYGTATLDPNIFVDESLNTPKLSVPD. 2 positions are modified to sulfotyrosine: Y11 and Y14. Residues 39–65 form a helical membrane-spanning segment; sequence MIALVIFVMVFLVGVPGNFLVVWVTGF. Residues 66–70 lie on the Cytoplasmic side of the membrane; it reads EVRRT. The helical transmembrane segment at 71–94 threads the bilayer; the sequence is INAIWFLNLAVADLLSCLALPILF. The Extracellular portion of the chain corresponds to 95 to 111; that stretch reads SSIVQQGYWPFGNAACR. The cysteines at positions 110 and 189 are disulfide-linked. The chain crosses the membrane as a helical span at residues 112-133; the sequence is ILPSLILLNMYASILLLTTISA. The Cytoplasmic segment spans residues 134–154; that stretch reads DRFVLVFNPIWCQNYRGPQLA. A helical transmembrane segment spans residues 155 to 175; it reads WAACSVAWAVALLLTVPSFIF. Over 176-202 the chain is Extracellular; the sequence is RGVHTEYFPFWMTCGVDYSGVGVLVER. Residues 203–228 traverse the membrane as a helical segment; that stretch reads GVAILRLLMGFLGPLVILSICYTFLL. At 229–244 the chain is on the cytoplasmic side; the sequence is IRTWSRKATRSTKTLK. Residues 245–267 traverse the membrane as a helical segment; that stretch reads VVVAVVVSFFVLWLPYQVTGMMM. Topologically, residues 268-284 are extracellular; it reads ALFYKHSESFRRVSRLD. The helical transmembrane segment at 285–305 threads the bilayer; sequence SLCVAVAYINCCINPIIYVLA. Residues 306 to 352 lie on the Cytoplasmic side of the membrane; it reads AQGFHSRFLKSLPARLRQVLAEESVGRDSKSITLSTVDTPAQKSQGV. S316, S329, S334, S336, and S340 each carry phosphoserine.

The protein belongs to the G-protein coupled receptor 1 family. In terms of assembly, homodimer. May also form higher-order oligomers. Interacts (when phosphorylated) with ARRB1 and ARRB2; the interaction is associated with internalization of C5aR. Post-translationally, sulfation plays a critical role in the association of C5aR with C5a, but no significant role in the ability of the receptor to transduce a signal and mobilize calcium in response to a small peptide agonist. Phosphorylated on serine residues in response to C5a binding, resulting in internalization of the receptor and short-term desensitization to C5a.

It is found in the cell membrane. The protein localises to the cytoplasmic vesicle. Receptor for the chemotactic and inflammatory peptide anaphylatoxin C5a. The ligand interacts with at least two sites on the receptor: a high-affinity site on the extracellular N-terminus, and a second site in the transmembrane region which activates downstream signaling events. Receptor activation stimulates chemotaxis, granule enzyme release, intracellular calcium release and superoxide anion production. The protein is C5a anaphylatoxin chemotactic receptor 1 (C5AR1) of Canis lupus familiaris (Dog).